The primary structure comprises 356 residues: Protein MGF 360-3L (356 aa).

The ANK repeat unit spans residues 61–93 (KLNTALVLAVKENNEDLIMLFTEWGANINYGLL).

This sequence belongs to the asfivirus MGF 360 family.

Its function is as follows. Plays a role in virus cell tropism, and may be required for efficient virus replication in macrophages. This African swine fever virus (isolate Warthog/Namibia/Wart80/1980) (ASFV) protein is Protein MGF 360-3L.